A 218-amino-acid chain; its full sequence is Redox-sensing transcriptional repressor Rex (218 aa).

The segment at residues 25 to 64 (WYLSYVQLLHADGCESVSSTRIARAVGVDASLVAKDLSYV) is a DNA-binding region (H-T-H motif). An NAD(+)-binding site is contributed by 99–104 (GVGSLG).

The protein belongs to the transcriptional regulatory Rex family. As to quaternary structure, homodimer.

The protein resides in the cytoplasm. Functionally, modulates transcription in response to changes in cellular NADH/NAD(+) redox state. This is Redox-sensing transcriptional repressor Rex from Porphyromonas gingivalis (strain ATCC 33277 / DSM 20709 / CIP 103683 / JCM 12257 / NCTC 11834 / 2561).